Reading from the N-terminus, the 451-residue chain is 2-succinylbenzoate--CoA ligase (451 aa).

This sequence belongs to the ATP-dependent AMP-binding enzyme family. MenE subfamily.

The catalysed reaction is 2-succinylbenzoate + ATP + CoA = 2-succinylbenzoyl-CoA + AMP + diphosphate. It functions in the pathway quinol/quinone metabolism; 1,4-dihydroxy-2-naphthoate biosynthesis; 1,4-dihydroxy-2-naphthoate from chorismate: step 5/7. The protein operates within quinol/quinone metabolism; menaquinone biosynthesis. In terms of biological role, converts 2-succinylbenzoate (OSB) to 2-succinylbenzoyl-CoA (OSB-CoA). This Escherichia coli (strain K12) protein is 2-succinylbenzoate--CoA ligase.